The chain runs to 124 residues: Urease subunit beta (124 aa).

Belongs to the urease beta subunit family. As to quaternary structure, heterotrimer of UreA (gamma), UreB (beta) and UreC (alpha) subunits. Three heterotrimers associate to form the active enzyme.

It localises to the cytoplasm. The catalysed reaction is urea + 2 H2O + H(+) = hydrogencarbonate + 2 NH4(+). It functions in the pathway nitrogen metabolism; urea degradation; CO(2) and NH(3) from urea (urease route): step 1/1. The polypeptide is Urease subunit beta (Ureaplasma urealyticum serovar 10 (strain ATCC 33699 / Western)).